We begin with the raw amino-acid sequence, 499 residues long: Glutamyl-tRNA(Gln) amidotransferase subunit A (499 aa).

Residues Lys76 and Ser151 each act as charge relay system in the active site. The active-site Acyl-ester intermediate is the Ser175.

The protein belongs to the amidase family. GatA subfamily. In terms of assembly, heterotrimer of A, B and C subunits.

It carries out the reaction L-glutamyl-tRNA(Gln) + L-glutamine + ATP + H2O = L-glutaminyl-tRNA(Gln) + L-glutamate + ADP + phosphate + H(+). Functionally, allows the formation of correctly charged Gln-tRNA(Gln) through the transamidation of misacylated Glu-tRNA(Gln) in organisms which lack glutaminyl-tRNA synthetase. The reaction takes place in the presence of glutamine and ATP through an activated gamma-phospho-Glu-tRNA(Gln). In Rhodopirellula baltica (strain DSM 10527 / NCIMB 13988 / SH1), this protein is Glutamyl-tRNA(Gln) amidotransferase subunit A.